We begin with the raw amino-acid sequence, 251 residues long: Triosephosphate isomerase (251 aa).

9 to 11 (NWK) is a substrate binding site. The active-site Electrophile is the H94. E166 serves as the catalytic Proton acceptor. Substrate contacts are provided by residues G172, S211, and 232–233 (GG).

This sequence belongs to the triosephosphate isomerase family. As to quaternary structure, homodimer.

The protein resides in the cytoplasm. It catalyses the reaction D-glyceraldehyde 3-phosphate = dihydroxyacetone phosphate. Its pathway is carbohydrate biosynthesis; gluconeogenesis. It participates in carbohydrate degradation; glycolysis; D-glyceraldehyde 3-phosphate from glycerone phosphate: step 1/1. Involved in the gluconeogenesis. Catalyzes stereospecifically the conversion of dihydroxyacetone phosphate (DHAP) to D-glyceraldehyde-3-phosphate (G3P). The chain is Triosephosphate isomerase from Xanthomonas oryzae pv. oryzae (strain MAFF 311018).